The primary structure comprises 564 residues: Bicarbonate transporter BicA (564 aa).

Residues 1-11 (MQITNKIHFRN) are Cytoplasmic-facing. Residues 12 to 37 (LQGDLFGGVTAAVIALPMALAFGIAS) traverse the membrane as a helical segment. Topologically, residues 38-40 (GAG) are periplasmic. The chain crosses the membrane as a helical span at residues 41–58 (ATAGLWGAVIVGFFAALF). Residues 59–70 (GGTPTLISEPTG) are Cytoplasmic-facing. Thr-69 serves as a coordination point for hydrogencarbonate. A helical membrane pass occupies residues 71–86 (PMTVVQTAVIASLVAA). Residues 87–90 (DPDN) lie on the Periplasmic side of the membrane. Residues 91–112 (GLAMAFTVVMMAGLFQIAFGLL) traverse the membrane as a helical segment. The Cytoplasmic segment spans residues 113-122 (KLGKYVTMMP). The chain crosses the membrane as a helical span at residues 123–145 (YTVISGFMSGIGIILVILQLAPF). At 146 to 170 (LGQASPKGGVIGTLQALPNLVSNVR) the chain is on the periplasmic side. The helical transmembrane segment at 171-185 (PVETLLALMTVGIIW) threads the bilayer. The Cytoplasmic portion of the chain corresponds to 186-196 (FMPSRWKKFAP). A helical membrane pass occupies residues 197–211 (PQLVALVLGTIISIT). Residues 212 to 240 (LFGDLDIRRIGEIQAGLPALQLPVFQADQ) lie on the Periplasmic side of the membrane. A helical transmembrane segment spans residues 241–269 (LQRMLIDAAVLGMLGCIDALLTSVVADSL). Na(+) is bound by residues Asp-258 and Thr-262. Residues 270-275 (TRTEHN) lie on the Cytoplasmic side of the membrane. Residues 276–292 (SNKELVGQGIGNVMSGL) traverse the membrane as a helical segment. The Periplasmic segment spans residues 293–302 (FGGLGGAGAT). Position 300 (Gly-300) interacts with Na(+). Ala-301 contributes to the hydrogencarbonate binding site. Thr-302 contacts Na(+). A helical transmembrane segment spans residues 303-312 (MGTVVNIQSG). The Cytoplasmic segment spans residues 313–315 (GRT). A helical transmembrane segment spans residues 316–338 (ALSGLIRAMVLLVVILGAAKLAA). At 339–341 (TIP) the chain is on the periplasmic side. The chain crosses the membrane as a helical span at residues 342–357 (LAVLAGIAFKVGVDII). The Cytoplasmic segment spans residues 358–369 (DWGFLKRAHHVS). Residues 370 to 390 (IKGALIMYAVIVLTVLVDLIA) form a helical membrane-spanning segment. The Periplasmic portion of the chain corresponds to 391-392 (AV). A helical membrane pass occupies residues 393–405 (GIGVFIANILTID). Topologically, residues 406–564 (RMSALQSKAV…PSSSSVQTTY (159 aa)) are cytoplasmic. The region spanning 432–542 (KRWLDEGNGR…DDRSEALKDA (111 aa)) is the STAS domain.

It belongs to the SLC26A/SulP transporter (TC 2.A.53) family. As to quaternary structure, forms homodimers through the STAS cytoplasmic domain.

Its subcellular location is the cell inner membrane. Low affinity, high-flux Na(+)-dependent bicarbonate transporter. Involved in carbone dioxide-concentrating mechanisms (CCMs) that accumulate CO(2) and improve photosynthetic carbon fixation. In Synechocystis sp. (strain ATCC 27184 / PCC 6803 / Kazusa), this protein is Bicarbonate transporter BicA.